A 545-amino-acid polypeptide reads, in one-letter code: MKSLALALLVGGAIAAGPQQQVLQAPVDNPDVAEPPLQTIADTFDHLRGQATNLWNDVIDKVPNIMDTITHTPPPKKFNRRPDSEWNHIVRGAEIQAVWVEGDDGEKHRKVGGKLEAYDLRVKAVDPKSLGVDTVRQYSGYLDDNENDKHLFYWFFESRNDPENDPVVLWLNGGPGCSSLTGLFLELGPSSITEDLKVNYNPYSWNANASVIFLDQPVNVGYSYSGGSVSDTNAAGKDVYALLTLFFEQFPEYAKQDFHIAGESYAGHYIPVFASEIMAHKERNINLKSILIGNGLTDPLTQYPLYRPMACGEGGYPAVLDQASCQSMDNALPRCLSMIEACYSSESAWTCVPASIYCNNAIIGPYQRTGRNPYDVRTDCEGGNLCYTQLGDISKYLNQAEVMKALGAEVSTYDSCNMDINRNFLFRGDWMKPFHRLVPGLIAEMPVLLYAGDADFICNWLGNKAWAEALEYPGHAKFAAAEMKNLTIVDNKSKGKVIGQVKSAGNFTFMRLYGGGHMVPLDQPEASLEFMNRWLKGEWSAKSSS.

The N-terminal stretch at 1-17 (MKSLALALLVGGAIAAG) is a signal peptide. Positions 18-123 (PQQQVLQAPV…KLEAYDLRVK (106 aa)) are excised as a propeptide. Disulfide bonds link Cys177–Cys416, Cys311–Cys325, Cys335–Cys358, Cys342–Cys351, and Cys380–Cys386. Asn208 carries N-linked (GlcNAc...) asparagine glycosylation. Ser264 is a catalytic residue. The active site involves Asp455. 3 N-linked (GlcNAc...) asparagine glycosylation sites follow: Asn485, Asn491, and Asn506. His517 is an active-site residue.

It belongs to the peptidase S10 family.

The protein resides in the vacuole. The enzyme catalyses Release of a C-terminal amino acid with broad specificity.. Vacuolar carboxypeptidase involved in degradation of small peptides. Digests preferentially peptides containing an aliphatic or hydrophobic residue in P1' position, as well as methionine, leucine or phenylalanine in P1 position of ester substrate. The protein is Carboxypeptidase Y homolog A (CPYA) of Ajellomyces dermatitidis (strain ER-3 / ATCC MYA-2586) (Blastomyces dermatitidis).